The following is a 191-amino-acid chain: Fe/S biogenesis protein NfuA (191 aa).

2 residues coordinate [4Fe-4S] cluster: Cys149 and Cys152.

Belongs to the NfuA family. Homodimer. The cofactor is [4Fe-4S] cluster.

Its function is as follows. Involved in iron-sulfur cluster biogenesis. Binds a 4Fe-4S cluster, can transfer this cluster to apoproteins, and thereby intervenes in the maturation of Fe/S proteins. Could also act as a scaffold/chaperone for damaged Fe/S proteins. The protein is Fe/S biogenesis protein NfuA of Serratia proteamaculans (strain 568).